Consider the following 347-residue polypeptide: NADH-ubiquinone oxidoreductase chain 2 (347 aa).

11 consecutive transmembrane segments (helical) span residues 1–21, 25–45, 59–79, 96–116, 122–142, 149–169, 178–198, 201–221, 237–257, 274–294, and 326–346; these read MNPMIFIILLTTIMLGTFIVT, HWFMTWLGFEMNMMAIVPVLM, YFLTQATASMILMLAIIINLM, MLITIALTMKLGLAPFHFWVP, VSLPSGLILLTWQKIAPLSLL, VNMNILLLMSLLSIMIGGWGG, IMAYSSIAHMGWMMAIMVYNP, SLLNLLIYIFMTSSMFMLLIF, APIITIMSLTTLLSLGGLPPL, NSVILPTLMAILALLNLFFYM, and MLPLITISTLALPLTPMLILL.

Belongs to the complex I subunit 2 family. As to quaternary structure, core subunit of respiratory chain NADH dehydrogenase (Complex I) which is composed of 45 different subunits. Interacts with TMEM242.

It is found in the mitochondrion inner membrane. The catalysed reaction is a ubiquinone + NADH + 5 H(+)(in) = a ubiquinol + NAD(+) + 4 H(+)(out). Its function is as follows. Core subunit of the mitochondrial membrane respiratory chain NADH dehydrogenase (Complex I) that is believed to belong to the minimal assembly required for catalysis. Complex I functions in the transfer of electrons from NADH to the respiratory chain. The immediate electron acceptor for the enzyme is believed to be ubiquinone. The sequence is that of NADH-ubiquinone oxidoreductase chain 2 from Crocidura suaveolens gueldenstaedtii (Gueldenstaedt's shrew).